Here is a 383-residue protein sequence, read N- to C-terminus: S-adenosylmethionine synthase (383 aa).

His15 is an ATP binding site. Mg(2+) is bound at residue Asp17. Position 43 (Glu43) interacts with K(+). The L-methionine site is built by Glu56 and Gln99. The tract at residues 99-109 is flexible loop; sequence QSQDINQGVDR. ATP is bound by residues 164–166, 230–231, Asp239, 245–246, Ala262, and Lys266; these read DAK, RF, and RK. Asp239 provides a ligand contact to L-methionine. An L-methionine-binding site is contributed by Lys270.

Belongs to the AdoMet synthase family. Homotetramer; dimer of dimers. Mg(2+) is required as a cofactor. K(+) serves as cofactor.

It localises to the cytoplasm. It catalyses the reaction L-methionine + ATP + H2O = S-adenosyl-L-methionine + phosphate + diphosphate. Its pathway is amino-acid biosynthesis; S-adenosyl-L-methionine biosynthesis; S-adenosyl-L-methionine from L-methionine: step 1/1. In terms of biological role, catalyzes the formation of S-adenosylmethionine (AdoMet) from methionine and ATP. The overall synthetic reaction is composed of two sequential steps, AdoMet formation and the subsequent tripolyphosphate hydrolysis which occurs prior to release of AdoMet from the enzyme. The protein is S-adenosylmethionine synthase of Actinobacillus succinogenes (strain ATCC 55618 / DSM 22257 / CCUG 43843 / 130Z).